Here is a 404-residue protein sequence, read N- to C-terminus: Spore germination protein YndF (404 aa).

Residues 1–24 (MKSKLKRQLPAMVIVCLLMICVTG) form the signal peptide. Cys25 is lipidated: N-palmitoyl cysteine. Cys25 carries the S-diacylglycerol cysteine lipid modification.

Belongs to the GerABKC lipoprotein family.

The protein localises to the cell membrane. Its function is as follows. May be involved in spore germination. The chain is Spore germination protein YndF (yndF) from Bacillus subtilis (strain 168).